The primary structure comprises 376 residues: Protein STRICTOSIDINE SYNTHASE-LIKE 2 (376 aa).

The N-terminal stretch at 1–23 (MMKLLLVVATSVALIFSVTDLSG) is a signal peptide. 2 N-linked (GlcNAc...) asparagine glycosylation sites follow: asparagine 79 and asparagine 244.

Belongs to the strictosidine synthase family.

It is found in the vacuole. This Arabidopsis thaliana (Mouse-ear cress) protein is Protein STRICTOSIDINE SYNTHASE-LIKE 2.